We begin with the raw amino-acid sequence, 914 residues long: Isoleucine--tRNA ligase (914 aa).

A 'HIGH' region motif is present at residues 64 to 74 (PYANGNFHLGH). Glu-557 provides a ligand contact to L-isoleucyl-5'-AMP. Residues 598-602 (PMSKS) carry the 'KMSKS' region motif. Residue Lys-601 participates in ATP binding. Zn(2+) contacts are provided by Cys-889, Cys-892, Cys-906, and Cys-909.

The protein belongs to the class-I aminoacyl-tRNA synthetase family. IleS type 1 subfamily. As to quaternary structure, monomer. Zn(2+) serves as cofactor.

The protein resides in the cytoplasm. The catalysed reaction is tRNA(Ile) + L-isoleucine + ATP = L-isoleucyl-tRNA(Ile) + AMP + diphosphate. Its function is as follows. Catalyzes the attachment of isoleucine to tRNA(Ile). As IleRS can inadvertently accommodate and process structurally similar amino acids such as valine, to avoid such errors it has two additional distinct tRNA(Ile)-dependent editing activities. One activity is designated as 'pretransfer' editing and involves the hydrolysis of activated Val-AMP. The other activity is designated 'posttransfer' editing and involves deacylation of mischarged Val-tRNA(Ile). The polypeptide is Isoleucine--tRNA ligase (Leptospira interrogans serogroup Icterohaemorrhagiae serovar copenhageni (strain Fiocruz L1-130)).